Here is a 357-residue protein sequence, read N- to C-terminus: Aspartate carbamoyltransferase catalytic subunit (357 aa).

A compositionally biased stretch (polar residues) spans 1–17; that stretch reads MSNSIDSQSIPTISPTD. The segment at 1–21 is disordered; that stretch reads MSNSIDSQSIPTISPTDYTKF. Carbamoyl phosphate is bound by residues arginine 97 and threonine 98. Lysine 125 contributes to the L-aspartate binding site. Carbamoyl phosphate-binding residues include arginine 147, histidine 177, and glutamine 180. L-aspartate is bound by residues arginine 211 and arginine 266. Residues glycine 307 and proline 308 each contribute to the carbamoyl phosphate site.

The protein belongs to the aspartate/ornithine carbamoyltransferase superfamily. ATCase family. In terms of assembly, heterododecamer (2C3:3R2) of six catalytic PyrB chains organized as two trimers (C3), and six regulatory PyrI chains organized as three dimers (R2).

It carries out the reaction carbamoyl phosphate + L-aspartate = N-carbamoyl-L-aspartate + phosphate + H(+). The protein operates within pyrimidine metabolism; UMP biosynthesis via de novo pathway; (S)-dihydroorotate from bicarbonate: step 2/3. Functionally, catalyzes the condensation of carbamoyl phosphate and aspartate to form carbamoyl aspartate and inorganic phosphate, the committed step in the de novo pyrimidine nucleotide biosynthesis pathway. The protein is Aspartate carbamoyltransferase catalytic subunit of Psychrobacter arcticus (strain DSM 17307 / VKM B-2377 / 273-4).